Consider the following 562-residue polypeptide: MSYANEEFEGSYDPYNYQADYDMHTGDPKQDLAYERQYEQQTYQVIPEVIKNFIQYFHKTVSDLIDQKVYELQASRVSSDVIDQKVYEIQDIYENSWTKLTERFFKNSPWPEAEAIAPQVGNDAVFLILYKELYYRHIYAKVSGGPTLEQRFESYYNYCNLFNYILNADGPAPLELPNQWLWDIIDEFIYQFQSFSQYRCKTAKKSEEEIEFLRSNPKIWNVHSVLNVLHSLVDKSNINRQLEVYTSGGDPESVAGEYGRHSLYKMLGYFSLVGLLRLHSLLGDYYQAIKVLENIELNKKSMYSRVPECQVTTYYYVGFAYLMMRRYQDAIRVFANILLYIQRTKSMFQRTTYKYEMINKQNEQMHGLLAIALTMYPMRIDESIHTQLREKYGDKMLRMQKGDAQIYEELFNYACPKFLSPVVPNYDNVHPNYHKEPYLQQLKVFLDEVQQQAQLSTIRSFLKLYTTMPVAKLAGFLDLPEQEFRIQLLVFKHKMKNLVWTSGISALEGEFQSASEVDFYIDKDMIHIADTKVARRYGDFFIRQIHKFEELNKTLKKMSQKP.

The PCI domain maps to 329-535; sequence DAIRVFANIL…IHIADTKVAR (207 aa).

It belongs to the eIF-3 subunit L family. In terms of assembly, component of the eukaryotic translation initiation factor 3 (eIF-3) complex, which is composed of 13 subunits: eif3a, eif3b, eif3c, eif3d, eif3e, eif3f, eif3g, eif3h, eif3i, eif3j, eif3k, eif3l and eif3m.

It is found in the cytoplasm. Functionally, component of the eukaryotic translation initiation factor 3 (eIF-3) complex, which is involved in protein synthesis of a specialized repertoire of mRNAs and, together with other initiation factors, stimulates binding of mRNA and methionyl-tRNAi to the 40S ribosome. The eIF-3 complex specifically targets and initiates translation of a subset of mRNAs involved in cell proliferation. The sequence is that of Eukaryotic translation initiation factor 3 subunit L (eif3l) from Xenopus tropicalis (Western clawed frog).